We begin with the raw amino-acid sequence, 299 residues long: Putative peptidyl-prolyl cis-trans isomerase HP_0175 (299 aa).

The first 21 residues, 1–21 (MKKNILNLALVGALSTSFLMA), serve as a signal peptide directing secretion. The 100-residue stretch at 154–253 (KQEAHARHIL…FGYHIIYLIS (100 aa)) folds into the PpiC domain.

The catalysed reaction is [protein]-peptidylproline (omega=180) = [protein]-peptidylproline (omega=0). The chain is Putative peptidyl-prolyl cis-trans isomerase HP_0175 from Helicobacter pylori (strain ATCC 700392 / 26695) (Campylobacter pylori).